The sequence spans 424 residues: MDFPIRSQARLYPAQCVTFCLYVRVPPLSEWNFLKMQTDARPSATWPSVPKVHKRNRSTSLSDQQTAKKAHANHARLHLPQPIEPVYESQNGSVSQSEEKSSAVEINNSAAGDPQRFAVADLNFSWAEEEEKVVLAPYDYVASNSGKEFRTLILNAFNAWFRVPPESLTIICDVVRMLHTSSLLIDDIQDNSLLRRGRPVAHSIYGVAQTINTGNYVYFLAAKELNKLRNAASALEVFTAEMLNLHRGQGQELYWRDTLKCPTEDEYLKMVSNKTGGLFRMAVKLMQAESPAGPMAPVCDKLVQLLGLVYQIADDYKNLTAVEYTTSKGFCEDLTEGKFSFPVVHSIQSRPEDRRLYQILAQKTTEVEVKKYAVSYIESTGSLEYTKQVVRVLVQRARDELSRIDQGRERNQEMHALLGKMALE.

Positions 42 to 73 are disordered; sequence PSATWPSVPKVHKRNRSTSLSDQQTAKKAHAN. The span at 58 to 67 shows a compositional bias: polar residues; the sequence is STSLSDQQTA. Positions 147, 150, and 179 each coordinate isopentenyl diphosphate. Mg(2+) is bound by residues D186 and D190. Residue R195 coordinates dimethylallyl diphosphate. Position 196 (R196) interacts with isopentenyl diphosphate. Residues K274, T275, Q311, K328, and K338 each contribute to the dimethylallyl diphosphate site.

It belongs to the FPP/GGPP synthase family. Requires Mg(2+) as cofactor.

It is found in the cytoplasm. It carries out the reaction isopentenyl diphosphate + dimethylallyl diphosphate = (2E)-geranyl diphosphate + diphosphate. The catalysed reaction is isopentenyl diphosphate + (2E)-geranyl diphosphate = (2E,6E)-farnesyl diphosphate + diphosphate. The enzyme catalyses isopentenyl diphosphate + (2E,6E)-farnesyl diphosphate = (2E,6E,10E)-geranylgeranyl diphosphate + diphosphate. It functions in the pathway isoprenoid biosynthesis; farnesyl diphosphate biosynthesis; farnesyl diphosphate from geranyl diphosphate and isopentenyl diphosphate: step 1/1. It participates in isoprenoid biosynthesis; geranyl diphosphate biosynthesis; geranyl diphosphate from dimethylallyl diphosphate and isopentenyl diphosphate: step 1/1. The protein operates within isoprenoid biosynthesis; geranylgeranyl diphosphate biosynthesis; geranylgeranyl diphosphate from farnesyl diphosphate and isopentenyl diphosphate: step 1/1. Functionally, catalyzes the trans-addition of the 3 molecules of isopentenyl diphosphate (IPP) onto dimethylallyl diphosphate (DMAPP) to form geranylgeranyl pyrophosphate (GGDP). The polypeptide is Geranylgeranyl pyrophosphate synthase D (GGS-D) (Phomopsis amygdali (Fusicoccum amygdali)).